Reading from the N-terminus, the 423-residue chain is Putative competence-damage inducible protein (423 aa).

The protein belongs to the CinA family.

The sequence is that of Putative competence-damage inducible protein from Streptococcus pyogenes serotype M2 (strain MGAS10270).